The chain runs to 490 residues: ATP synthase subunit beta, chloroplastic (490 aa).

Thr6 bears the Phosphothreonine mark. Phosphoserine is present on Ser13. 172-179 (GGAGVGKT) contributes to the ATP binding site.

It belongs to the ATPase alpha/beta chains family. As to quaternary structure, F-type ATPases have 2 components, CF(1) - the catalytic core - and CF(0) - the membrane proton channel. CF(1) has five subunits: alpha(3), beta(3), gamma(1), delta(1), epsilon(1). CF(0) has four main subunits: a(1), b(1), b'(1) and c(9-12).

It is found in the plastid. The protein localises to the chloroplast thylakoid membrane. It catalyses the reaction ATP + H2O + 4 H(+)(in) = ADP + phosphate + 5 H(+)(out). Produces ATP from ADP in the presence of a proton gradient across the membrane. The catalytic sites are hosted primarily by the beta subunits. This chain is ATP synthase subunit beta, chloroplastic, found in Aethionema cordifolium (Lebanon stonecress).